A 318-amino-acid chain; its full sequence is NADH-ubiquinone oxidoreductase chain 1 (318 aa).

8 helical membrane-spanning segments follow: residues 2–22 (PVIN…FLML), 69–89 (ILYI…WTPL), 100–120 (LGLL…LWSG), 146–166 (LALI…STLI), 171–191 (HSWL…STLA), 222–242 (LFFM…AMIF), 253–273 (ELHT…FLWI), and 294–314 (LPLT…TSGI).

It belongs to the complex I subunit 1 family. In terms of assembly, core subunit of respiratory chain NADH dehydrogenase (Complex I) which is composed of 45 different subunits.

It localises to the mitochondrion inner membrane. The enzyme catalyses a ubiquinone + NADH + 5 H(+)(in) = a ubiquinol + NAD(+) + 4 H(+)(out). Its function is as follows. Core subunit of the mitochondrial membrane respiratory chain NADH dehydrogenase (Complex I) which catalyzes electron transfer from NADH through the respiratory chain, using ubiquinone as an electron acceptor. Essential for the catalytic activity and assembly of complex I. This Pongo pygmaeus (Bornean orangutan) protein is NADH-ubiquinone oxidoreductase chain 1 (MT-ND1).